We begin with the raw amino-acid sequence, 140 residues long: uncharacterized protein (140 aa).

An N-linked (GlcNAc...) asparagine glycan is attached at N27. 3 helical membrane-spanning segments follow: residues 45 to 65 (FSLY…GVYA), 76 to 96 (VWIF…TGTV), and 116 to 136 (VPLC…YSMV).

The protein belongs to the TMEM170 family.

It localises to the membrane. This is an uncharacterized protein from Saccharomyces cerevisiae (strain ATCC 204508 / S288c) (Baker's yeast).